A 206-amino-acid polypeptide reads, in one-letter code: Guanylyl cyclase inhibitory protein (206 aa).

The N-myristoyl glycine moiety is linked to residue Gly-2. 4 EF-hand domains span residues 31–49 (SGLITLHEFRQFFSDVTVG), 51–86 (NSSEYAEQIFRALDNNGDGIVDFREYVTAISMLAHG), 87–122 (TPEDKLKWSFKLYDKDGDGAITRSEMLEIMRAVYKM), and 135–170 (TAEECTNRIFVRLDKDQNAIISLQEFVDGSLGDEWV). Residues Asp-64, Asn-66, Asp-68, Glu-75, Asp-100, Asp-102, Asp-104, and Glu-111 each coordinate Ca(2+).

As to expression, retina; inner segments, somata and synaptic terminals of cone receptors.

Its function is as follows. Does not stimulate guanylyl cyclase (GC) when free calcium ion concentration is low, but inhibits GC when free calcium ions concentration is elevated. This Lithobates pipiens (Northern leopard frog) protein is Guanylyl cyclase inhibitory protein (GCIP).